The sequence spans 204 residues: Tumor protein D53 (204 aa).

The segment at 1 to 20 is disordered; that stretch reads MEAQAQGLLETEPLQGTDED. The stretch at 22-73 forms a coiled coil; that stretch reads VASADFSSMLSEEEKEELKAELVQLEDEITTLRQVLSAKERHLVEIKQKLGM. 4 positions are modified to phosphoserine: Ser29, Ser86, Ser122, and Ser131. Residue Arg133 is modified to Omega-N-methylarginine. Position 146 is a phosphothreonine (Thr146). A phosphoserine mark is found at Ser149 and Ser174.

This sequence belongs to the TPD52 family. In terms of assembly, forms a homodimer or heterodimer with other members of the family.

The polypeptide is Tumor protein D53 (TPD52L1) (Homo sapiens (Human)).